The primary structure comprises 350 residues: Cobalt-precorrin-5B C(1)-methyltransferase (350 aa).

It belongs to the CbiD family.

It catalyses the reaction Co-precorrin-5B + S-adenosyl-L-methionine = Co-precorrin-6A + S-adenosyl-L-homocysteine. The protein operates within cofactor biosynthesis; adenosylcobalamin biosynthesis; cob(II)yrinate a,c-diamide from sirohydrochlorin (anaerobic route): step 6/10. Catalyzes the methylation of C-1 in cobalt-precorrin-5B to form cobalt-precorrin-6A. The protein is Cobalt-precorrin-5B C(1)-methyltransferase of Sulfurisphaera tokodaii (strain DSM 16993 / JCM 10545 / NBRC 100140 / 7) (Sulfolobus tokodaii).